A 305-amino-acid chain; its full sequence is Endonuclease III-like protein 1 (305 aa).

The N-terminal 28 residues, 1–28, are a transit peptide targeting the mitochondrion; the sequence is MNAAGVRMVVTRARSRGTGASLRRRGEK. The segment at 1–83 is disordered; it reads MNAAGVRMVV…HLQAPSWQPQ (83 aa). Serine 64 carries the phosphoserine modification. A HhH domain is found at 192–216; that stretch reads RYDGDIPASVAELVALPGVGPKMAH. Catalysis depends on lysine 213, which acts as the Nucleophile; for N-glycosylase activity. Cysteine 283, cysteine 290, cysteine 293, and cysteine 299 together coordinate [4Fe-4S] cluster.

It belongs to the Nth/MutY family. Interacts with YBX1. Interacts with ERCC5/XPG; the interaction stimulates NTHL1 activity and NTHL1 binding to its DNA substrate. [4Fe-4S] cluster is required as a cofactor.

It localises to the nucleus. Its subcellular location is the mitochondrion. It catalyses the reaction 2'-deoxyribonucleotide-(2'-deoxyribose 5'-phosphate)-2'-deoxyribonucleotide-DNA = a 3'-end 2'-deoxyribonucleotide-(2,3-dehydro-2,3-deoxyribose 5'-phosphate)-DNA + a 5'-end 5'-phospho-2'-deoxyribonucleoside-DNA + H(+). Bifunctional DNA N-glycosylase with associated apurinic/apyrimidinic (AP) lyase function that catalyzes the first step in base excision repair (BER), the primary repair pathway for the repair of oxidative DNA damage. The DNA N-glycosylase activity releases the damaged DNA base from DNA by cleaving the N-glycosidic bond, leaving an AP site. The AP lyase activity cleaves the phosphodiester bond 3' to the AP site by a beta-elimination. Primarily recognizes and repairs oxidative base damage of pyrimidines. This Bos taurus (Bovine) protein is Endonuclease III-like protein 1.